We begin with the raw amino-acid sequence, 115 residues long: uncharacterized protein (115 aa).

Residues 1-115 (MGETWFLTPN…ARSPERTPSP (115 aa)) are disordered. Polar residues predominate over residues 7-17 (LTPNGQSSPGS). Low complexity-rich tracts occupy residues 60–70 (ASCAPRATPRR) and 91–107 (SASAPAGPASSAPWPAR).

This is an uncharacterized protein from Human adenovirus C serotype 2 (HAdV-2).